We begin with the raw amino-acid sequence, 347 residues long: UDP-3-O-acylglucosamine N-acyltransferase (347 aa).

H245 (proton acceptor) is an active-site residue.

Belongs to the transferase hexapeptide repeat family. LpxD subfamily. As to quaternary structure, homotrimer.

It carries out the reaction a UDP-3-O-[(3R)-3-hydroxyacyl]-alpha-D-glucosamine + a (3R)-hydroxyacyl-[ACP] = a UDP-2-N,3-O-bis[(3R)-3-hydroxyacyl]-alpha-D-glucosamine + holo-[ACP] + H(+). Its pathway is bacterial outer membrane biogenesis; LPS lipid A biosynthesis. Catalyzes the N-acylation of UDP-3-O-acylglucosamine using 3-hydroxyacyl-ACP as the acyl donor. Is involved in the biosynthesis of lipid A, a phosphorylated glycolipid that anchors the lipopolysaccharide to the outer membrane of the cell. The sequence is that of UDP-3-O-acylglucosamine N-acyltransferase from Chromohalobacter salexigens (strain ATCC BAA-138 / DSM 3043 / CIP 106854 / NCIMB 13768 / 1H11).